The following is a 430-amino-acid chain: tRNA(Ile)-lysidine synthase (430 aa).

27–32 is a binding site for ATP; that stretch reads SGGSDS.

The protein belongs to the tRNA(Ile)-lysidine synthase family.

Its subcellular location is the cytoplasm. The enzyme catalyses cytidine(34) in tRNA(Ile2) + L-lysine + ATP = lysidine(34) in tRNA(Ile2) + AMP + diphosphate + H(+). In terms of biological role, ligates lysine onto the cytidine present at position 34 of the AUA codon-specific tRNA(Ile) that contains the anticodon CAU, in an ATP-dependent manner. Cytidine is converted to lysidine, thus changing the amino acid specificity of the tRNA from methionine to isoleucine. This Rickettsia prowazekii (strain Madrid E) protein is tRNA(Ile)-lysidine synthase.